Consider the following 120-residue polypeptide: Large ribosomal subunit protein eL18 (120 aa).

The protein belongs to the eukaryotic ribosomal protein eL18 family.

This chain is Large ribosomal subunit protein eL18, found in Pyrococcus abyssi (strain GE5 / Orsay).